Here is a 623-residue protein sequence, read N- to C-terminus: Keratin, type I cytoskeletal 9 (623 aa).

Over residues 1 to 13 the composition is skewed to low complexity; the sequence is MSCRQFSSSYLSR. The interval 1 to 25 is disordered; sequence MSCRQFSSSYLSRSGGGGGGGLGSG. Residues 1–152 form a head region; sequence MSCRQFSSSY…GGDGGILTAN (152 aa). A phosphoserine mark is found at Ser-14 and Ser-57. Positions 14–25 are enriched in gly residues; the sequence is SGGGGGGGLGSG. The interval 153–188 is coil 1A; sequence EKSTMQELNSRLASYLDKVQALEEANNDLENKIQDW. The region spanning 153–465 is the IF rod domain; the sequence is EKSTMQELNS…NLLEGGQEDF (313 aa). The interval 189–207 is linker 1; that stretch reads YDKKGPAAIQKNYSPYYNT. A coil 1B region spans residues 208-299; sequence IDDLKDQIVD…KNHKEEMSQL (92 aa). The tract at residues 300-322 is linker 12; sequence TGQNSGDVNVEINVAPGKDLTKT. The segment at 323-461 is coil 2; the sequence is LNDMRQEYEQ…ETYHNLLEGG (139 aa). Disordered stretches follow at residues 462–496 and 534–623; these read QEDFESSGAGKIGLGGRGGSGGSYGRGSRGGSGGS and YGGG…SSHS. The tract at residues 462–623 is tail; that stretch reads QEDFESSGAG…GGGSGKSSHS (162 aa). Residues 471–496 are compositionally biased toward gly residues; sequence GKIGLGGRGGSGGSYGRGSRGGSGGS.

The protein belongs to the intermediate filament family. In terms of assembly, heterotetramer of two type I and two type II keratins. In terms of tissue distribution, expressed in the terminally differentiated epidermis of palms and soles.

Its function is as follows. May serve an important special function either in the mature palmar and plantar skin tissue or in the morphogenetic program of the formation of these tissues. Plays a role in keratin filament assembly. In Homo sapiens (Human), this protein is Keratin, type I cytoskeletal 9 (KRT9).